The following is a 373-amino-acid chain: MRNDLVLEDTTLRDGEQTPGVAFSKETKTAILNALIEAGVTSIEIGIPAMGGEELDFIKSVVDRQDEARLVVWHRGVREDVERSLDLGFTSVHVGLPTSAGHLKASVRKDRTWLLATARDMVKMAKDRGAFVSISAEDIARTEISFLQEYAGVVAEAGADRLRLSDTVGLLGPEAYGERVAAVLSAADIDVQCHAHNDFGLATANTLAGLKAGARYFHVTVNAIGERAGMADLAQVVVALKKLYDRDLGIDLTKLKKVSRLVAEAAGHQVLPWQPITGDNVFAHESGIHANGMFRDTSSFEPFPPEHVGGERRYVLGKHSGRALVAWALEQEGITPREELLPHCLEEVRALSIRIGGAVSHEQLVEIYNKAAA.

Residues 5–256 (LVLEDTTLRD…DLGIDLTKLK (252 aa)) enclose the Pyruvate carboxyltransferase domain.

The protein belongs to the alpha-IPM synthase/homocitrate synthase family.

It carries out the reaction 3-phosphonopyruvate + acetyl-CoA + H2O = (R)-2-(phosphonomethyl)malate + CoA + H(+). Its pathway is antibiotic biosynthesis. Functionally, acyltransferase involved in the biosynthesis of the phosphonate antibiotic FR-900098, a potent antimalarial agent that acts as an inhibitor of 1-deoxy-D-xylulose 5-phosphate reductoisomerase (DXR), the first enzyme in the nonmevalonate pathway for isoprenoid biosynthesis. Catalyzes the condensation between acetyl-CoA and phosphonopyruvate to yield (R)-2-(phosphonomethyl)malate. The sequence is that of 2-phosphonomethylmalate synthase from Streptomyces rubellomurinus (strain ATCC 31215).